Reading from the N-terminus, the 849-residue chain is uncharacterized protein (849 aa).

The next 2 helical transmembrane spans lie at 587 to 607 (VALGEALAAVTLAVGDFLGLF) and 620 to 640 (AGILTLLAAFESIYSFITGDW).

The protein localises to the cell membrane. This is an uncharacterized protein from Methanocaldococcus jannaschii (strain ATCC 43067 / DSM 2661 / JAL-1 / JCM 10045 / NBRC 100440) (Methanococcus jannaschii).